The primary structure comprises 132 residues: Phosphomevalonate dehydratase small subunit (132 aa).

Ser58 acts as the Proton acceptor in catalysis.

Belongs to the AcnX type II small subunit family. As to quaternary structure, heterodimer composed of a large subunit (PMDh-L) and a small subunit (PMDh-S).

The enzyme catalyses (R)-5-phosphomevalonate = (2E)-3-methyl-5-phosphooxypent-2-enoate + H2O. The protein operates within isoprenoid biosynthesis; isopentenyl diphosphate biosynthesis via mevalonate pathway. Neither the addition of 1 mM Mg(2+) nor 1 mM Mn(2+) has a significant effect on the activity, whereas Zn(2+) causes almost complete inactivation. Strongly inhibited by H(2)O(2), but not by EDTA or iodoacetamide. In terms of biological role, component of a hydro-lyase that catalyzes the dehydration of mevalonate 5-phosphate (MVA5P) to form trans-anhydromevalonate 5-phosphate (tAHMP). Involved in the archaeal mevalonate (MVA) pathway, which provides fundamental precursors for isoprenoid biosynthesis, such as isopentenyl diphosphate (IPP) and dimethylallyl diphosphate (DMAPP). The polypeptide is Phosphomevalonate dehydratase small subunit (Aeropyrum pernix (strain ATCC 700893 / DSM 11879 / JCM 9820 / NBRC 100138 / K1)).